Reading from the N-terminus, the 140-residue chain is Encapsulated ferritin-like protein (140 aa).

Glutamate 31 contacts Ca(2+). A Fe cation-binding site is contributed by glutamate 32. Ca(2+) is bound at residue glutamate 34. 2 residues coordinate Fe cation: glutamate 62 and histidine 65. The segment at alanine 100–leucine 140 is disordered. The tract at residues alanine 100–leucine 140 is targeting peptide.

Belongs to the ferritin-like superfamily. EncFtn family. In terms of assembly, monomers form antiparallel dimers which assemble in a decameric ring 7 nm in diameter and 4.5 nm thick with a central channel (construct without targeting peptide). Growth in Fe(2+)-rich medium induces oligomerization, the monomer does not bind metals. The target peptide probably extends away from the ring, to allow binding to the interior of the encapsulin nanocompartment shell. It depends on Fe(2+) as a cofactor. The cofactor is Ca(2+).

The protein resides in the encapsulin nanocompartment. The catalysed reaction is 4 Fe(2+) + O2 + 4 H(+) = 4 Fe(3+) + 2 H2O. Its activity is regulated as follows. Ferroxidase activity inhibited by Zn(2+). Mutants at Glu-31, Glu-34 and Trp-38 are also inhibited by Zn(2+). Cargo protein of a type 1 encapsulin nanocompartment. A ferritin-like ferroxidase that mineralizes iron inside the encapsulin nanocompartment. Converts Fe(2+) to Fe(3+) that is released to the exterior of the decameric complex for deposition in the encapsulin nanocompartment. In solution the decamer binds 10-15 iron cations; in the encapsulin nanocompartment the decamer can bind up to 48 ions, perhaps via its internal channel and on its exterior. The empty encapsulin nanocompartment sequesters about 2200 Fe ions while the cargo-loaded nanocompartment can maximally sequester about 4150 Fe ions. EncFtn retains ferroxidase activity when encapsulated. Flux in the active site di-iron metal center is thought to be controlled by the 'entry site' of the protein, which both attracts metal and controls the rate of iron oxidation. Encapsulation in the nanocompartment does not alter either function of this protein. The sequence is that of Encapsulated ferritin-like protein from Rhodospirillum rubrum (strain ATCC 11170 / ATH 1.1.1 / DSM 467 / LMG 4362 / NCIMB 8255 / S1).